We begin with the raw amino-acid sequence, 196 residues long: Glycerol-3-phosphate acyltransferase (196 aa).

The next 5 membrane-spanning stretches (helical) occupy residues 4–24 (LTLT…AILV), 56–76 (ATVL…AYFL), 80–100 (SLYL…PIFF), 114–134 (TLLP…VLVV), and 155–175 (VYFL…LILF).

It belongs to the PlsY family. Probably interacts with PlsX.

It localises to the cell inner membrane. It catalyses the reaction an acyl phosphate + sn-glycerol 3-phosphate = a 1-acyl-sn-glycero-3-phosphate + phosphate. The protein operates within lipid metabolism; phospholipid metabolism. Catalyzes the transfer of an acyl group from acyl-phosphate (acyl-PO(4)) to glycerol-3-phosphate (G3P) to form lysophosphatidic acid (LPA). This enzyme utilizes acyl-phosphate as fatty acyl donor, but not acyl-CoA or acyl-ACP. The sequence is that of Glycerol-3-phosphate acyltransferase from Colwellia psychrerythraea (strain 34H / ATCC BAA-681) (Vibrio psychroerythus).